The following is a 293-amino-acid chain: MFISLWEFFYGHFFRFWMKWLLRQMTGKCELQRIFDTYVGAQRTHRIENSLTYSKNKVLQKATHVVQSEVDKYVDDIMKEKNINPEKDASFKICMKMCLLQITGYKQLYLDVESVRKRPYDSDNLQHEELLMKLWNLLMPTKKLNARISKQWAEIGFQGDDPKTDFRGMGILGLINLVYFSENYTSEAHQILSRSNHPKLGYSYAIVGINLTEMAYSLLKSEALKFHLYNLVPGIPTMEHFHQFYCYLVYEFDKFWFEEEPESIMYFNLYREKFHEKIKGLLLDCNVALTLKV.

An ELMO domain is found at 126–282 (QHEELLMKLW…KFHEKIKGLL (157 aa)).

Alveolar cells (morphologically type II cells) and alveolar macrophages (at protein level). Expressed in brain, colon, heart, kidney, liver, lung, muscle, placenta, small intestine, spleen, stomach and testis. In lung it is expressed in alveolar macrophages and alveolar walls.

Its function is as follows. Acts as a GTPase-activating protein (GAP) toward guanine nucleotide exchange factors like ARL2, ARL3, ARF1 and ARF6, but not for GTPases outside the Arf family. Regulates IFN-related antiviral responses. This chain is ELMO domain-containing protein 2 (ELMOD2), found in Homo sapiens (Human).